The chain runs to 443 residues: Probable 26S proteasome regulatory subunit 4 (443 aa).

A disordered region spans residues Met-1–Pro-53. The segment covering Gly-12–Glu-29 has biased composition (basic and acidic residues). Residue Gly-229 to Thr-236 coordinates ATP.

Belongs to the AAA ATPase family.

The protein localises to the cytoplasm. Its subcellular location is the nucleus. The 26S proteasome is involved in the ATP-dependent degradation of ubiquitinated proteins. The regulatory (or ATPase) complex confers ATP dependency and substrate specificity to the 26S complex. May play a role in the degradation of microtubule severing protein mei-1. In Caenorhabditis elegans, this protein is Probable 26S proteasome regulatory subunit 4 (rpt-2).